The chain runs to 330 residues: Protein LEG1 homolog (330 aa).

An N-terminal signal peptide occupies residues Met1 to Ala20. N-linked (GlcNAc...) asparagine glycosylation is found at Asn24 and Asn69.

The protein belongs to the LEG1 family. As to expression, detected in saliva and in hypomineralized dental enamel (at protein level).

It localises to the secreted. In terms of biological role, may be involved in early liver development. The sequence is that of Protein LEG1 homolog from Homo sapiens (Human).